The following is a 252-amino-acid chain: Phosphoglycolate phosphatase (252 aa).

Catalysis depends on aspartate 13, which acts as the Nucleophile. Mg(2+) is bound by residues aspartate 13, aspartate 15, and aspartate 192.

Belongs to the HAD-like hydrolase superfamily. CbbY/CbbZ/Gph/YieH family. As to quaternary structure, monomer. Requires Mg(2+) as cofactor. It depends on chloride as a cofactor.

The enzyme catalyses 2-phosphoglycolate + H2O = glycolate + phosphate. Its pathway is organic acid metabolism; glycolate biosynthesis; glycolate from 2-phosphoglycolate: step 1/1. In terms of biological role, specifically catalyzes the dephosphorylation of 2-phosphoglycolate. Is involved in the dissimilation of the intracellular 2-phosphoglycolate formed during the DNA repair of 3'-phosphoglycolate ends, a major class of DNA lesions induced by oxidative stress. This Salmonella typhi protein is Phosphoglycolate phosphatase.